Reading from the N-terminus, the 105-residue chain is DNA-directed RNA polymerase subunit Rpo13 (105 aa).

2 stretches are compositionally biased toward basic and acidic residues: residues 1 to 10 (MSEDDSKKEP) and 70 to 80 (FDDVARSYSKA). Disordered stretches follow at residues 1-35 (MSED…GGEF) and 70-105 (FDDV…EEEE). The segment covering 81 to 97 (DKKKRRVEKKPKKGKVT) has biased composition (basic residues).

It belongs to the archaeal Rpo13 RNA polymerase subunit family. As to quaternary structure, part of the 13-subunit RNA polymerase.

Its subcellular location is the cytoplasm. The catalysed reaction is RNA(n) + a ribonucleoside 5'-triphosphate = RNA(n+1) + diphosphate. Functionally, DNA-dependent RNA polymerase catalyzes the transcription of DNA into RNA using the four ribonucleoside triphosphates as substrates. In vitro binds dsDNA but not ssDNA. The sequence is that of DNA-directed RNA polymerase subunit Rpo13 from Sulfolobus acidocaldarius (strain ATCC 33909 / DSM 639 / JCM 8929 / NBRC 15157 / NCIMB 11770).